Here is a 512-residue protein sequence, read N- to C-terminus: Extracellular serine/threonine protein kinase CeFam20 (512 aa).

At 1–6 the chain is on the cytoplasmic side; it reads MRCNIK. Residues 7-26 traverse the membrane as a helical; Signal-anchor for type II membrane protein segment; sequence RLFTLAIGVFAATLVIISFS. Residues 27 to 512 are Lumenal-facing; it reads KDNYEREWKQ…QDKKDDKKTV (486 aa). Residues Cys110 and Cys144 are joined by a disulfide bond. N-linked (GlcNAc...) asparagine glycosylation is present at Asn113. Residues Gln176, Lys192, and Glu213 each coordinate ATP. Glu213 contacts Mn(2+). Asn242 carries N-linked (GlcNAc...) asparagine glycosylation. Intrachain disulfides connect Cys268/Cys284 and Cys273/Cys277. Residue 295–298 participates in ATP binding; the sequence is QVFL. 2 cysteine pairs are disulfide-bonded: Cys333–Cys409 and Cys410–Cys469. Asp366 is an active-site residue. The ATP site is built by Glu371 and Asp387. Asp387 lines the Mn(2+) pocket. The segment at 486-512 is disordered; that stretch reads PDVSDAEQNDEEQSEEHQDKKDDKKTV. Acidic residues predominate over residues 489-499; it reads SDAEQNDEEQS. Basic and acidic residues predominate over residues 500-512; sequence EEHQDKKDDKKTV.

This sequence belongs to the FAM20 family. Mn(2+) serves as cofactor.

The protein resides in the golgi apparatus membrane. The protein localises to the secreted. The catalysed reaction is L-seryl-[protein] + ATP = O-phospho-L-seryl-[protein] + ADP + H(+). It carries out the reaction L-threonyl-[protein] + ATP = O-phospho-L-threonyl-[protein] + ADP + H(+). Functionally, golgi serine/threonine protein kinase that phosphorylates secretory pathway proteins within Ser-x-Glu/pSer motifs. The chain is Extracellular serine/threonine protein kinase CeFam20 from Caenorhabditis elegans.